The chain runs to 366 residues: Terpene cyclase-like protein flvF (366 aa).

Belongs to the terpene synthase family. Homodimer.

It catalyses the reaction N,N-dimethyl-cadaverine + 2,6,9-trimethyl-13-oxatetracyclo[6.3.1.1(6,9).0(1,5)]tridecane carbocation = pre-flavunoidine + H(+). It functions in the pathway secondary metabolite biosynthesis; terpenoid biosynthesis. Functionally, terpene cyclase-like protein; part of the gene cluster that mediates the biosynthesis of flavunoidine, an alkaloidal terpenoid with a tetracyclic cage-like core connected to dimethylcadaverine via a C-N bond and acylated with 5,5-dimethyl-L-pipecolate. The tetracyclic core is synthesized by the terpene cyclase flvE and the cytochrome P450 monooxygenase flvD. The terpene cyclase flvE catalyzes the cyclization of farnesyl pyrophosphate (FPP) to form (1R,4R,5S)-(+)-acoradiene and the cytochrome P450 monooxygenase flvD is then responsible for oxidative conversion of (1R,4R,5S)-(+)-acoradiene into the tetracyclic cage present in the final product flavunoidine. In parallel, the N-methyltransferase flvH dimethylates L-lysine to give N,N-dimethyl-L-Lysin which is decarboxylated by flvG to afford dimethylcadaverine. The terpene cyclase-like protein flvF is the enzyme that attaches the dimethylcadaverine precusor at the C-7 of the tetracyclic cage to yield pre-flavunoidine. The cytochrome monooxygenase flvC hydroxylates the C-10 position of pre-flavunoidine whereas the NRPS flvI acylates the terpenoid core at the hydroxylated C-10 with dimethylpipecolate to yield final flavunoidine. The bifunctional enzyme flvA and the dehydrogenase flvB are responsible for the synthesis of the dimethylpipecolate precursor. The PLP-dependent lyase domain of flvA might use L-O-acetyl-homoserine and alpha-keto-isovalerate to form an intermediary ketone that can cyclize intramolecularly to yield an imine. The imine can be reduced by flvB to yield the 6-carboxylated pipecolate. The C-terminal alpha-KG-dependent oxygenase domain of flvA is then proposed to catalyze the decarboxylation to yield dimethylpipecolate. This Aspergillus flavus (strain ATCC 200026 / FGSC A1120 / IAM 13836 / NRRL 3357 / JCM 12722 / SRRC 167) protein is Terpene cyclase-like protein flvF.